Consider the following 427-residue polypeptide: Indole diterpene prenyltransferase penD (427 aa).

Residue 77 to 78 (YV) participates in L-tryptophan binding. R99, K186, Y188, R259, K261, Y263, Y344, Y409, and Y413 together coordinate substrate.

The protein belongs to the tryptophan dimethylallyltransferase family.

The protein operates within secondary metabolite biosynthesis. Indole diterpene prenyltransferase; part of the gene cluster that mediates the biosynthesis of the indole diterpenes penitrems. The geranylgeranyl diphosphate (GGPP) synthase penG catalyzes the first step in penitrem biosynthesis via conversion of farnesyl pyrophosphate and isopentyl pyrophosphate into geranylgeranyl pyrophosphate (GGPP). Condensation of indole-3-glycerol phosphate with GGPP by the prenyl transferase penC then forms 3-geranylgeranylindole (3-GGI). Epoxidation by the FAD-dependent monooxygenase penM leads to a epoxidized-GGI that is substrate of the terpene cyclase penB for cyclization to yield paspaline. Paspaline is subsequently converted to 13-desoxypaxilline by the cytochrome P450 monooxygenase penP, the latter being then converted to paxilline by the cytochrome P450 monooxygenase penQ. Paxilline is converted to beta-paxitriol via C-10 ketoreduction by the short-chain dehydrogenase PC-15 which can be monoprenylated at the C-20 by the indole diterpene prenyltransferase penD. A two-step elimination (acetylation and elimination) process performed by the O-acetyltransferase PC-16 and the P.simplicissimum ptmI-ortholog not yet identified in P.crustosum, leads to the production of the prenylated form of penijanthine. The FAD-linked oxidoreductase ptmO then converts the prenylated form of penijanthine into PC-M5 which is in turn transformed into PC-M4 by the aromatic dimethylallyltransferase PC-22. A series of oxidation steps involving 4 cytochrome P450 monooxygenases (PC-21, PC-05, PC-23, PC-20) and a FAD-dependent monooxygenase (PC-14) are required for the transformation of PC-M4 to penitrems A and E. Synthesis of these final products is proposed to proceed via penitrems D and C (PC-21, PC-05, PC-14) and penitrems B and F (PC-21, PC-05, PC-14, PC-23). The chain is Indole diterpene prenyltransferase penD from Penicillium crustosum (Blue mold fungus).